A 211-amino-acid chain; its full sequence is NADH-quinone oxidoreductase subunit C (211 aa).

The protein belongs to the complex I 30 kDa subunit family. NDH-1 is composed of 14 different subunits. Subunits NuoB, C, D, E, F, and G constitute the peripheral sector of the complex.

It is found in the cell inner membrane. It catalyses the reaction a quinone + NADH + 5 H(+)(in) = a quinol + NAD(+) + 4 H(+)(out). Its function is as follows. NDH-1 shuttles electrons from NADH, via FMN and iron-sulfur (Fe-S) centers, to quinones in the respiratory chain. The immediate electron acceptor for the enzyme in this species is believed to be ubiquinone. Couples the redox reaction to proton translocation (for every two electrons transferred, four hydrogen ions are translocated across the cytoplasmic membrane), and thus conserves the redox energy in a proton gradient. This is NADH-quinone oxidoreductase subunit C from Azorhizobium caulinodans (strain ATCC 43989 / DSM 5975 / JCM 20966 / LMG 6465 / NBRC 14845 / NCIMB 13405 / ORS 571).